Here is a 204-residue protein sequence, read N- to C-terminus: Putative glutathione S-transferase alpha-3 (204 aa).

An N-acetylthreonine modification is found at Thr-2. Residues 2–79 enclose the GST N-terminal domain; it reads TKPQLSYFKV…YIASQHDFVG (78 aa). Glutathione contacts are provided by residues Tyr-8, 49 to 50, and 63 to 64; these read QL and QS. The GST C-terminal domain maps to 81 to 202; the sequence is TPEEKALVDE…YLKNRPITER (122 aa).

The protein belongs to the GST superfamily. Alpha family.

It carries out the reaction RX + glutathione = an S-substituted glutathione + a halide anion + H(+). In terms of biological role, conjugation of reduced glutathione to a wide number of exogenous and endogenous hydrophobic electrophiles. This is Putative glutathione S-transferase alpha-3 (gsta3) from Dictyostelium discoideum (Social amoeba).